The chain runs to 1893 residues: Nestin (1893 aa).

Met1 is subject to N-acetylmethionine. Residues 1–7 (MEGCVGE) are head. Residues 8–43 (ESFQMWELNRRLEAYLTRVKTLEEQNQLLSAELGGL) form a coil 1A region. Positions 8–314 (ESFQMWELNR…TLLEAENSRL (307 aa)) constitute an IF rod domain. The linker 1 stretch occupies residues 44 to 55 (RAQSGDTSWRAR). Residues 56 to 151 (ADDELASLRI…AAHEEERAHL (96 aa)) are coil 1B. Residues 150 to 172 (HLNAQAACAPRRPPAPPHGSPVR) are disordered. The interval 152–174 (NAQAACAPRRPPAPPHGSPVRAP) is linker 12. The tract at residues 175 to 193 (EVEDLARRLGEVWRGAVRD) is coil 2A. The interval 194–196 (YQE) is linker 2. The coil 2B stretch occupies residues 197-314 (RVAHMESSLG…TLLEAENSRL (118 aa)). Phosphoserine is present on Ser312. Residues 315-1893 (QTPGRGSQAS…DGDSWSSGED (1579 aa)) are tail. Thr316 bears the Phosphothreonine mark. Phosphoserine occurs at positions 356 and 359. Thr389 is subject to Phosphothreonine. 3 disordered regions span residues 437-479 (PELE…SGSR), 507-529 (NSSAQKTQESGLDTEETQDSQGP), and 556-879 (KENC…NQKS). Residues 507 to 517 (NSSAQKTQESG) show a composition bias toward polar residues. Residue Ser562 is modified to Phosphoserine. Composition is skewed to basic and acidic residues over residues 572-595 (GPEKEKQIPLKSLEEKNVESEKTL) and 606-615 (LGKEDTRTED). The residue at position 620 (Ser620) is a Phosphoserine. Basic and acidic residues-rich tracts occupy residues 634–646 (ESQEVVRPSKEGN) and 670–681 (MLERLVEKEDQS). 2 positions are modified to phosphoserine: Ser685 and Ser729. Basic and acidic residues-rich tracts occupy residues 717–730 (RLIEKESQESLRSP), 761–774 (RLIEKESQESLRSA), 802–818 (ILERLIEKESQESLRSP), and 846–879 (MLERLIEKESQESLKSPEENQRIGKPLERENQKS). Ser817 bears the Phosphoserine mark. The residue at position 903 (Ser903) is a Phosphoserine. Basic and acidic residues-rich tracts occupy residues 949 to 966 (LLEDKTHKSLGSLEDRNG) and 989 to 1051 (QRIV…KSLE). The tract at residues 949–1130 (LLEDKTHKSL…ARSLGKENQE (182 aa)) is disordered. Residues Ser1005 and Ser1049 each carry the phosphoserine modification. Residue Lys1136 forms a Glycyl lysine isopeptide (Lys-Gly) (interchain with G-Cter in SUMO1); alternate linkage. Lys1136 participates in a covalent cross-link: Glycyl lysine isopeptide (Lys-Gly) (interchain with G-Cter in SUMO2); alternate. 2 positions are modified to phosphoserine: Ser1145 and Ser1166. The tract at residues 1155 to 1222 (ETAEEDLERR…ELSSLGKWNV (68 aa)) is disordered. Residues 1198–1212 (DENRETLTSLEKESQ) are compositionally biased toward basic and acidic residues. Residues Ser1216 and Ser1229 each carry the phosphoserine modification. A disordered region spans residues 1237–1263 (EGLQEEQHQESLREVKQELPSSGNQQR). Residues 1241 to 1253 (EEQHQESLREVKQ) show a composition bias toward basic and acidic residues. Phosphoserine is present on Ser1322. 2 disordered regions span residues 1336-1369 (DNLEGGALEVPVAQSMPEVTERDEDRAQAGEQDS) and 1388-1824 (EVVG…SEQV). Composition is skewed to basic and acidic residues over residues 1354–1363 (VTERDEDRAQ) and 1393–1403 (EDPRHFAREEA). 2 stretches are compositionally biased toward acidic residues: residues 1458–1469 (ESMEGWEEEEAS) and 1561–1576 (QDWEEGREESEADDLG). 6 positions are modified to phosphoserine: Ser1570, Ser1594, Ser1686, Ser1695, Ser1772, and Ser1774. The span at 1688–1709 (GFADEEESGEEGEEEDADEEGA) shows a compositional bias: acidic residues. Over residues 1773-1788 (GSEESESASLEGEEGQ) the composition is skewed to acidic residues. Residues 1815–1824 (QSPNLDSEQV) are compositionally biased toward polar residues. 3 positions are modified to phosphoserine: Ser1866, Ser1889, and Ser1890. Residues 1870 to 1893 (LGPSQPLKFTLSGVDGDSWSSGED) are disordered.

The protein belongs to the intermediate filament family. Forms homodimers and homotetramers in vitro. In mixtures with other intermediate filament proteins such as vimentin and alpha-internexin, this protein preferentially forms heterodimers which can assemble to form intermediate filaments if nestin does not exceed 25%. Interacts with FHOD3. Post-translationally, constitutively phosphorylated. This increases during mitosis when the cytoplasmic intermediate filament network is reorganized. In terms of tissue distribution, CNS stem cells.

Functionally, required for brain and eye development. Promotes the disassembly of phosphorylated vimentin intermediate filaments (IF) during mitosis and may play a role in the trafficking and distribution of IF proteins and other cellular factors to daughter cells during progenitor cell division. Required for survival, renewal and mitogen-stimulated proliferation of neural progenitor cells. The protein is Nestin (Nes) of Rattus norvegicus (Rat).